We begin with the raw amino-acid sequence, 176 residues long: Small capsomere-interacting protein (176 aa).

2 disordered regions span residues 75 to 109 (DKRQRASVAGAGAHAHLGGSSATPVQQAQAAASAG) and 148 to 176 (ASAAAAVDTGSGGGGQPHDTAPRGARKKQ). A compositionally biased stretch (low complexity) spans 80–109 (ASVAGAGAHAHLGGSSATPVQQAQAAASAG).

This sequence belongs to the herpesviridae small capsomere-interacting protein family. As to quaternary structure, interacts with the major capsid protein/MCP.

It is found in the virion. It localises to the host nucleus. In terms of biological role, participates in the assembly of the infectious particles by decorating the outer surface of the capsid shell and thus forming a layer between the capsid and the tegument. Complexes composed of the major capsid protein and small capsomere-interacting protein/SCP assemble together in the host cytoplasm and are translocated to the nucleus, where they accumulate and participate in capsid assembly. This chain is Small capsomere-interacting protein, found in Epstein-Barr virus (strain B95-8) (HHV-4).